The following is a 55-amino-acid chain: uncharacterized protein (55 aa).

This is an uncharacterized protein from Avena byzantina (Oat).